The following is a 741-amino-acid chain: Eukaryotic translation initiation factor 3 subunit B (741 aa).

Over residues 1–10 (MAPSFDTLSE) the composition is skewed to polar residues. The interval 1–22 (MAPSFDTLSEQDLHEEEEEEID) is disordered. Over residues 13–22 (LHEEEEEEID) the composition is skewed to acidic residues. One can recognise an RRM domain in the interval 40 to 126 (TFVVIDGLPV…HTLLVNKLMD (87 aa)). 5 WD repeats span residues 193–230 (AHWT…KQKQ), 232–289 (PHPF…RSFV), 303–344 (QPKK…LLGK), 514–557 (IEKK…EKPE), and 572–610 (LEHY…HTFS). The interval 695 to 722 (KDAYGLPEDVDDPKKAKDAPAVTSEQGE) is disordered.

This sequence belongs to the eIF-3 subunit B family. As to quaternary structure, component of the eukaryotic translation initiation factor 3 (eIF-3) complex.

The protein localises to the cytoplasm. In terms of biological role, RNA-binding component of the eukaryotic translation initiation factor 3 (eIF-3) complex, which is involved in protein synthesis of a specialized repertoire of mRNAs and, together with other initiation factors, stimulates binding of mRNA and methionyl-tRNAi to the 40S ribosome. The eIF-3 complex specifically targets and initiates translation of a subset of mRNAs involved in cell proliferation. The sequence is that of Eukaryotic translation initiation factor 3 subunit B (prt1) from Aspergillus clavatus (strain ATCC 1007 / CBS 513.65 / DSM 816 / NCTC 3887 / NRRL 1 / QM 1276 / 107).